The following is a 359-amino-acid chain: Protein HEXIM1 (359 aa).

The disordered stretch occupies residues 1 to 163; the sequence is MAEPFLSEYQ…RRRPSKKKRH (163 aa). The span at 9–19 shows a compositional bias: polar residues; sequence YQHQPQTSNCT. 2 stretches are compositionally biased toward basic and acidic residues: residues 34–47 and 84–93; these read PGAE…DSRW and CLREGEKGQN. Phosphoserine is present on residues S97 and S98. Over residues 148–163 the composition is skewed to basic residues; sequence LGKKKHRRRPSKKKRH. A basic region; mediates nuclear localization and interaction with 7SK snRNA and NR3C1 region spans residues 150–177; that stretch reads KKKHRRRPSKKKRHWKPYYKLTWEEKKK. Residues 202-205 form an interaction with P-TEFb region; it reads PYNT. The tract at residues 210–250 is autoinhibitory acidic region; in absence of 7SK snRNA interacts with the basic region preventing interaction with P-TEFb and modulating subcellular localization; sequence MDDHDQEEPDLKTGLYSKRAAAKSDDTSDDDFMEEGGEEDG. The segment at 213-262 is disordered; the sequence is HDQEEPDLKTGLYSKRAAAKSDDTSDDDFMEEGGEEDGGSDGMGGDGSEF. S233 carries the post-translational modification Phosphoserine. T236 is modified (phosphothreonine). Over residues 236–251 the composition is skewed to acidic residues; it reads TSDDDFMEEGGEEDGG. Residues S237, S252, and S260 each carry the phosphoserine modification. Residues 283 to 349 adopt a coiled-coil conformation; it reads SKQELIKEYL…LTENELHRQQ (67 aa). The mediates interaction with CCNT1 stretch occupies residues 286 to 314; that stretch reads ELIKEYLELEKCLSRMEDENNRLRLESKR. Residues 310–355 form a required for inhibition of ESR1-dependent transcription region; the sequence is LESKRLGGDDARVRELELELDRLRAENLQLLTENELHRQQERAPLS.

It belongs to the HEXIM family. In terms of assembly, homooligomer and heterooligomer with HEXIM2; probably dimeric. Core component of the 7SK RNP complex, at least composed of 7SK RNA, LARP7, MEPCE, HEXIM1 (or HEXIM2) and P-TEFb (composed of CDK9 and CCNT1/cyclin-T1). Interacts with the N-CoR complex through NCOR1. Interacts with ESR1 and NR3C1. May interact with NF-kappa-B through RELA. Interacts with CCNT2; mediates formation of a tripartite complex with KPNA2. Part of the HDP-RNP complex composed of at least HEXIM1, PRKDC, XRCC5, XRCC6, paraspeckle proteins (SFPQ, NONO, PSPC1, RBM14, and MATR3) and NEAT1 non-coding RNA. As to expression, ubiquitously expressed with higher expression in placenta. HEXIM1 and HEXIM2 are differentially expressed. Expressed in endocrine tissues.

Its subcellular location is the nucleus. The protein resides in the cytoplasm. In terms of biological role, transcriptional regulator which functions as a general RNA polymerase II transcription inhibitor. Core component of the 7SK RNP complex: in cooperation with 7SK snRNA sequesters P-TEFb in a large inactive 7SK snRNP complex preventing RNA polymerase II phosphorylation and subsequent transcriptional elongation. May also regulate NF-kappa-B, ESR1, NR3C1 and CIITA-dependent transcriptional activity. Plays a role in the regulation of DNA virus-mediated innate immune response by assembling into the HDP-RNP complex, a complex that serves as a platform for IRF3 phosphorylation and subsequent innate immune response activation through the cGAS-STING pathway. In Homo sapiens (Human), this protein is Protein HEXIM1 (HEXIM1).